Here is a 220-residue protein sequence, read N- to C-terminus: pH-response regulator palI/RIM9 homolog 1 (220 aa).

Over 1–5 the chain is Cytoplasmic; the sequence is MSHFK. The helical transmembrane segment at 6 to 26 threads the bilayer; the sequence is IVFLTSLSLALVFELFNTISV. Residues 27–89 are Extracellular-facing; sequence PITSHLFISE…NHAKYALSKL (63 aa). A helical membrane pass occupies residues 90 to 110; sequence LLVHVLSFVCVLVFWLFAILI. Over 111 to 121 the chain is Cytoplasmic; it reads CIKWLNTSKSV. The helical transmembrane segment at 122–142 threads the bilayer; that stretch reads LLFAVGWSMVTFMVSLLGFLI. The Extracellular portion of the chain corresponds to 143–155; the sequence is DVLMFASHVTWSS. A helical membrane pass occupies residues 156–176; it reads WLMLVSAFFVALSGILLCLMI. The Cytoplasmic portion of the chain corresponds to 177–220; it reads RDLSYRRFVKLQGEVDVCVPMTEPRDPDELNEIWKKKTSKREIL.

The protein belongs to the palI/RIM9 family.

Its subcellular location is the cell membrane. Required for the proteolytic cleavage of the transcription factor RIM101 in response to alkaline ambient pH. The sequence is that of pH-response regulator palI/RIM9 homolog 1 from Kluyveromyces lactis (strain ATCC 8585 / CBS 2359 / DSM 70799 / NBRC 1267 / NRRL Y-1140 / WM37) (Yeast).